The primary structure comprises 134 residues: Small ribosomal subunit protein uS11 (134 aa).

The tract at residues 114-134 (TPVPHNGTRPPRKWFKRQEKR) is disordered. The segment covering 123-134 (PPRKWFKRQEKR) has biased composition (basic residues).

The protein belongs to the universal ribosomal protein uS11 family. As to quaternary structure, part of the 30S ribosomal subunit. Interacts with proteins S7 and S18. Binds to IF-3.

Functionally, located on the platform of the 30S subunit, it bridges several disparate RNA helices of the 16S rRNA. Forms part of the Shine-Dalgarno cleft in the 70S ribosome. The protein is Small ribosomal subunit protein uS11 of Mesomycoplasma hyopneumoniae (strain 232) (Mycoplasma hyopneumoniae).